A 240-amino-acid chain; its full sequence is Ribosomal RNA large subunit methyltransferase E (240 aa).

Positions 1–28 (MSSSPRSPDARPLKVRVKSARTRSSSSQ) are disordered. S-adenosyl-L-methionine contacts are provided by glycine 80, tryptophan 82, aspartate 103, aspartate 119, and aspartate 143. The active-site Proton acceptor is lysine 183.

This sequence belongs to the class I-like SAM-binding methyltransferase superfamily. RNA methyltransferase RlmE family.

The protein localises to the cytoplasm. It carries out the reaction uridine(2552) in 23S rRNA + S-adenosyl-L-methionine = 2'-O-methyluridine(2552) in 23S rRNA + S-adenosyl-L-homocysteine + H(+). Functionally, specifically methylates the uridine in position 2552 of 23S rRNA at the 2'-O position of the ribose in the fully assembled 50S ribosomal subunit. In Azorhizobium caulinodans (strain ATCC 43989 / DSM 5975 / JCM 20966 / LMG 6465 / NBRC 14845 / NCIMB 13405 / ORS 571), this protein is Ribosomal RNA large subunit methyltransferase E.